We begin with the raw amino-acid sequence, 80 residues long: Toxin-like peptide AaF1CA1 (80 aa).

Residues 1–22 form the signal peptide; it reads MMKLVLFSVIVILFSLIGSIHG. The LCN-type CS-alpha/beta domain occupies 25 to 80; that stretch reads VPGNYPLRPFRYRYGCAVPGDSDYCVRVCRKHGVRYGYCWFFTCWCEYLEDKNIKI. 3 disulfides stabilise this stretch: C40/C63, C49/C68, and C53/C70.

This sequence belongs to the long (3 C-C) scorpion toxin superfamily. As to expression, expressed by the venom gland.

It is found in the secreted. Its function is as follows. Probable ion channel inhibitor. The protein is Toxin-like peptide AaF1CA1 of Androctonus australis (Sahara scorpion).